We begin with the raw amino-acid sequence, 92 residues long: Cell division topological specificity factor (92 aa).

Belongs to the MinE family.

Functionally, prevents the cell division inhibition by proteins MinC and MinD at internal division sites while permitting inhibition at polar sites. This ensures cell division at the proper site by restricting the formation of a division septum at the midpoint of the long axis of the cell. The protein is Cell division topological specificity factor of Gluconobacter oxydans (strain 621H) (Gluconobacter suboxydans).